The primary structure comprises 254 residues: Chaperone protein PmfD (254 aa).

The first 26 residues, 1 to 26 (MNSFSTLKTLFCGSLLALSLVNTTQA), serve as a signal peptide directing secretion.

This sequence belongs to the periplasmic pilus chaperone family.

It localises to the periplasm. Involved in the biogenesis of the PMF fimbria. The sequence is that of Chaperone protein PmfD (pmfD) from Proteus mirabilis (strain HI4320).